The chain runs to 163 residues: UPF0260 protein GOX1406 (163 aa).

The protein belongs to the UPF0260 family.

This chain is UPF0260 protein GOX1406, found in Gluconobacter oxydans (strain 621H) (Gluconobacter suboxydans).